We begin with the raw amino-acid sequence, 187 residues long: Putative AgrB-like protein 1 (187 aa).

Helical transmembrane passes span 29-49 (VVIV…IAGI), 50-70 (LGYF…KPFI), 81-98 (CFIA…LVTF), 103-120 (LFSI…IYNK), and 149-169 (ILFL…TITW).

The protein belongs to the AgrB family.

The protein localises to the cell membrane. Functionally, may be involved in the proteolytic processing of a quorum sensing system signal molecule precursor. In Clostridium perfringens (strain 13 / Type A), this protein is Putative AgrB-like protein 1.